Consider the following 383-residue polypeptide: Putative 8-amino-7-oxononanoate synthase (383 aa).

Arg22 provides a ligand contact to substrate. 109 to 110 (GY) contacts pyridoxal 5'-phosphate. Position 134 (His134) interacts with substrate. Pyridoxal 5'-phosphate-binding positions include Ser182, 207-210 (DDAH), and 236-239 (TLSK). Lys239 is modified (N6-(pyridoxal phosphate)lysine). Thr348 is a binding site for substrate.

The protein belongs to the class-II pyridoxal-phosphate-dependent aminotransferase family. BioF subfamily. In terms of assembly, homodimer. Requires pyridoxal 5'-phosphate as cofactor.

The catalysed reaction is 6-carboxyhexanoyl-[ACP] + L-alanine + H(+) = (8S)-8-amino-7-oxononanoate + holo-[ACP] + CO2. The protein operates within cofactor biosynthesis; biotin biosynthesis. Its function is as follows. Catalyzes the decarboxylative condensation of pimeloyl-[acyl-carrier protein] and L-alanine to produce 8-amino-7-oxononanoate (AON), [acyl-carrier protein], and carbon dioxide. The polypeptide is Putative 8-amino-7-oxononanoate synthase (bioF) (Caulobacter sp. (strain K31)).